The chain runs to 484 residues: UDP-N-acetylmuramate--L-alanine ligase (484 aa).

Residue 126 to 132 coordinates ATP; that stretch reads GTHGKTT.

Belongs to the MurCDEF family.

Its subcellular location is the cytoplasm. It catalyses the reaction UDP-N-acetyl-alpha-D-muramate + L-alanine + ATP = UDP-N-acetyl-alpha-D-muramoyl-L-alanine + ADP + phosphate + H(+). The protein operates within cell wall biogenesis; peptidoglycan biosynthesis. Cell wall formation. The protein is UDP-N-acetylmuramate--L-alanine ligase of Tolumonas auensis (strain DSM 9187 / NBRC 110442 / TA 4).